Reading from the N-terminus, the 298-residue chain is Junctional adhesion molecule A (298 aa).

Residues 1–28 (MGTEARAGRRQLLVFTSVVLSSLALGRG) form the signal peptide. Ig-like V-type domains are found at residues 29 to 126 (AVYT…VQLT) and 134 to 227 (PTVH…EAVR). The Extracellular portion of the chain corresponds to 29 to 237 (AVYTSEPDVR…MEAAELNVGG (209 aa)). Disulfide bonds link C49–C108 and C152–C211. Residue N184 is glycosylated (N-linked (GlcNAc...) asparagine). A helical membrane pass occupies residues 238-258 (IVAAVLVTLILLGFLILGIWF). At 259 to 298 (AYRRGYFDRTKKGTSSKKVIYSQPAARSEGEFRQTSSFLV) the chain is on the cytoplasmic side. Residues S280 and S286 each carry the phosphoserine modification.

It belongs to the immunoglobulin superfamily. Interacts with the ninth PDZ domain of MPDZ. Interacts with the first PDZ domain of PARD3. The association between PARD3 and PARD6B probably disrupts this interaction. Interacts with ITGAL (via I-domain). Interacts with CD151. In terms of assembly, (Microbial infection) Interacts with calicivirus capsid protein. As to quaternary structure, (Microbial infection) Interacts with the orthoreovirus sigma-1 capsid protein.

Its subcellular location is the cell junction. The protein resides in the tight junction. It localises to the cell membrane. In terms of biological role, seems to play a role in epithelial tight junction formation. Appears early in primordial forms of cell junctions and recruits PARD3. The association of the PARD6-PARD3 complex may prevent the interaction of PARD3 with JAM1, thereby preventing tight junction assembly. Plays a role in regulating monocyte transmigration involved in integrity of epithelial barrier. Ligand for integrin alpha-L/beta-2 involved in memory T-cell and neutrophil transmigration. Involved in platelet activation. (Microbial infection) Acts as a functional receptor for murine norovirus. Its function is as follows. (Microbial infection) In case of orthoreovirus infection, serves as receptor for the virus. This is Junctional adhesion molecule A (F11R) from Felis catus (Cat).